Consider the following 2190-residue polypeptide: Integrator complex subunit 1 (2190 aa).

Residues 1 to 61 (MNRAKPTTVR…GLPSERKRDA (61 aa)) form a disordered region. Ser-13 is subject to Phosphoserine. The span at 34–44 (GQANESKTAST) shows a compositional bias: polar residues. The residue at position 47 (Lys-47) is an N6-acetyllysine. A Phosphothreonine modification is found at Thr-83. Ser-87, Ser-307, and Ser-924 each carry phosphoserine. A disordered region spans residues 922-945 (AASGEEDDEGESKEQKAKKRQRQQ). Positions 923-932 (ASGEEDDEGE) are enriched in acidic residues. Residues 1159-1179 (TATMHILVVHAMVILLTLGPP) traverse the membrane as a helical segment. The disordered stretch occupies residues 1311 to 1334 (SLPPRRDSTEAPKPKSSPEQPIGQ). Positions 1314 to 1323 (PRRDSTEAPK) are enriched in basic and acidic residues. A phosphoserine mark is found at Ser-1318, Ser-1326, Ser-1327, and Ser-1395.

Belongs to the Integrator subunit 1 family. In terms of assembly, component of the Integrator complex, composed of core subunits INTS1, INTS2, INTS3, INTS4, INTS5, INTS6, INTS7, INTS8, INTS9/RC74, INTS10, INTS11/CPSF3L, INTS12, INTS13, INTS14 and INTS15. The core complex associates with protein phosphatase 2A subunits PPP2CA and PPP2R1A, to form the Integrator-PP2A (INTAC) complex. Interacts with ESRRB, ESRRB is not a core component of the Integrator complex and this association is a bridge for the interaction with the multiprotein complex Integrator; attracts the transcriptional machinery.

It is found in the nucleus. The protein localises to the nucleus membrane. Its function is as follows. Component of the integrator complex, a multiprotein complex that terminates RNA polymerase II (Pol II) transcription in the promoter-proximal region of genes. The integrator complex provides a quality checkpoint during transcription elongation by driving premature transcription termination of transcripts that are unfavorably configured for transcriptional elongation: the complex terminates transcription by (1) catalyzing dephosphorylation of the C-terminal domain (CTD) of Pol II subunit POLR2A/RPB1 and SUPT5H/SPT5, (2) degrading the exiting nascent RNA transcript via endonuclease activity and (3) promoting the release of Pol II from bound DNA. The integrator complex is also involved in terminating the synthesis of non-coding Pol II transcripts, such as enhancer RNAs (eRNAs), small nuclear RNAs (snRNAs), telomerase RNAs and long non-coding RNAs (lncRNAs). Within the integrator complex, INTS1 is involved in the post-termination step: INTS1 displaces INTS3 and the SOSS factors, allowing the integrator complex to return to the closed conformation, ready to bind to the paused elongation complex for another termination cycle. Mediates recruitment of cytoplasmic dynein to the nuclear envelope, probably as component of the integrator complex. The polypeptide is Integrator complex subunit 1 (Homo sapiens (Human)).